The chain runs to 398 residues: tRNA-specific 2-thiouridylase MnmA (398 aa).

ATP is bound by residues 20–27 (AMSGGVDS) and Leu46. The active-site Nucleophile is Cys114. A disulfide bridge links Cys114 with Cys210. Gly138 lines the ATP pocket. The segment at 160 to 162 (RDQ) is interaction with tRNA. Cys210 serves as the catalytic Cysteine persulfide intermediate.

The protein belongs to the MnmA/TRMU family.

It localises to the cytoplasm. It catalyses the reaction S-sulfanyl-L-cysteinyl-[protein] + uridine(34) in tRNA + AH2 + ATP = 2-thiouridine(34) in tRNA + L-cysteinyl-[protein] + A + AMP + diphosphate + H(+). Catalyzes the 2-thiolation of uridine at the wobble position (U34) of tRNA, leading to the formation of s(2)U34. The chain is tRNA-specific 2-thiouridylase MnmA from Brucella suis (strain ATCC 23445 / NCTC 10510).